The following is a 406-amino-acid chain: Cyclin-dependent kinase 4 homolog (406 aa).

In terms of domain architecture, Protein kinase spans 102–388 (TFLFQALGKG…ARGALSHPFL (287 aa)). ATP is bound by residues 108 to 116 (LGKGAYGNV) and Lys131. Asp233 functions as the Proton acceptor in the catalytic mechanism. Mg(2+)-binding residues include Asn238 and Asp251.

The protein belongs to the protein kinase superfamily. CMGC Ser/Thr protein kinase family. CDC2/CDKX subfamily. Interacts with cyd-1; the interaction is likely involved in regulating cdk-4 activity. Mg(2+) serves as cofactor.

It carries out the reaction L-seryl-[protein] + ATP = O-phospho-L-seryl-[protein] + ADP + H(+). It catalyses the reaction L-threonyl-[protein] + ATP = O-phospho-L-threonyl-[protein] + ADP + H(+). Functionally, serine/threonine-protein kinase which, in association with cyclin D-like protein cyd-1, is required for the progression through the G1 phase of the cell cycle during postembryonic development by phosphorylating and inhibiting lin-35 and fzr-1. In complex with cyd-1, involved in sex determination during gonadogenesis by regulating the asymmetric division of the somatic gonadal precursor cell (SGP). The polypeptide is Cyclin-dependent kinase 4 homolog (Caenorhabditis elegans).